A 294-amino-acid polypeptide reads, in one-letter code: 7,8-dihydropterin-6-methyl-4-(beta-D-ribofuranosyl)-aminobenzene-5'-phosphate synthase (294 aa).

4 residues coordinate substrate: Glu116, Asp186, Lys228, and His265.

The protein belongs to the metallo-beta-lactamase superfamily. It depends on Mg(2+) as a cofactor.

The catalysed reaction is 4-(beta-D-ribofuranosyl)aminobenzene 5'-phosphate + (7,8-dihydropterin-6-yl)methyl diphosphate = N-[(7,8-dihydropterin-6-yl)methyl]-4-(beta-D-ribofuranosyl)aniline 5'-phosphate + diphosphate. Its pathway is cofactor biosynthesis; 5,6,7,8-tetrahydromethanopterin biosynthesis. In terms of biological role, catalyzes the condensation of 6-hydroxymethyl-7,8-dihydropterin pyrophosphate (DHPP) with 4-(beta-D-ribofuranosyl)-aminobenzene-5'-phosphate (beta-RFA-P) to form 7,8-dihydropterin-6-methyl-4-(beta-D-ribofuranosyl)-aminobenzene-5'-phosphate, a precursor in the biosynthesis of 5,6,7,8-tetrahydromethanopterin (H4MPT). To a lesser extent, is able to condense beta-RFA-P with another arylamine, 1-(4-aminophenyl)-1-deoxy-D-ribitol (APDR), to form 7,8-dihydropterin-6-methyl-1-(4-aminophenyl)-1-deoxy-D-ribitol. Dephosphorylated beta-RFA-P is not a substrate. The sequence is that of 7,8-dihydropterin-6-methyl-4-(beta-D-ribofuranosyl)-aminobenzene-5'-phosphate synthase from Methanocaldococcus jannaschii (strain ATCC 43067 / DSM 2661 / JAL-1 / JCM 10045 / NBRC 100440) (Methanococcus jannaschii).